We begin with the raw amino-acid sequence, 408 residues long: FAD-dependent monooxygenase nscC (408 aa).

The first 20 residues, 1–20, serve as a signal peptide directing secretion; it reads MASRLPILIIGAGISGLTTA. FAD is bound by residues Glu-34 and Ala-45. Residues Asn-91 and Asn-103 are each glycosylated (N-linked (GlcNAc...) asparagine). Arg-119 lines the FAD pocket. N-linked (GlcNAc...) asparagine glycans are attached at residues Asn-170 and Asn-231. Residues Asp-328 and Gly-341 each coordinate FAD.

The protein belongs to the paxM FAD-dependent monooxygenase family. FAD is required as a cofactor.

Its pathway is secondary metabolite biosynthesis. In terms of biological role, FAD-dependent monooxygenase; part of the gene cluster that mediates the biosynthesis of neosartoricin, a prenylated anthracenone that exhibits T-cell antiproliferative activity, suggestive of a physiological role as an immunosuppressive agent. The non-reducing polyketide synthase nscA probably synthesizes and cyclizes the decaketide backbone. The hydrolase nscB then mediates the product release through hydrolysis followed by spontaneous decarboxylation. The prenyltransferase nscD catalyzes the addition of the dimethylallyl group to the aromatic C5. The FAD-dependent monooxygenase nscC is then responsible for the stereospecific hydroxylation at C2. There is no gene encoding O-acetyltransferase in the nsc gene cluster; thus, the last step of 2-O-acetylation leading to neosartoricin may be catalyzed by an unidentified O-acetyltransferase. This is FAD-dependent monooxygenase nscC from Aspergillus fumigatus (strain ATCC MYA-4609 / CBS 101355 / FGSC A1100 / Af293) (Neosartorya fumigata).